Reading from the N-terminus, the 365-residue chain is 2-aminoethylphosphonate--pyruvate transaminase (365 aa).

Position 194 is an N6-(pyridoxal phosphate)lysine (Lys194).

The protein belongs to the class-V pyridoxal-phosphate-dependent aminotransferase family. PhnW subfamily. In terms of assembly, homodimer. It depends on pyridoxal 5'-phosphate as a cofactor.

The catalysed reaction is (2-aminoethyl)phosphonate + pyruvate = phosphonoacetaldehyde + L-alanine. Functionally, involved in phosphonate degradation. The protein is 2-aminoethylphosphonate--pyruvate transaminase of Bacillus thuringiensis subsp. konkukian (strain 97-27).